The chain runs to 354 residues: GTPase Obg (354 aa).

The 159-residue stretch at 1–159 folds into the Obg domain; that stretch reads MKFVDEVKIH…RDLVLELKLL (159 aa). The region spanning 160–333 is the OBG-type G domain; that stretch reads ADVGIVGYPN…LLDAVGRALF (174 aa). Residues 166–173, 191–195, 212–215, 283–286, and 314–316 each bind GTP; these read GYPNAGKS, FTTLT, DIPG, TKID, and SAV. Residues Ser-173 and Thr-193 each contribute to the Mg(2+) site.

This sequence belongs to the TRAFAC class OBG-HflX-like GTPase superfamily. OBG GTPase family. Monomer. Mg(2+) is required as a cofactor.

It localises to the cytoplasm. Its function is as follows. An essential GTPase which binds GTP, GDP and possibly (p)ppGpp with moderate affinity, with high nucleotide exchange rates and a fairly low GTP hydrolysis rate. Plays a role in control of the cell cycle, stress response, ribosome biogenesis and in those bacteria that undergo differentiation, in morphogenesis control. The chain is GTPase Obg from Anaeromyxobacter dehalogenans (strain 2CP-1 / ATCC BAA-258).